A 240-amino-acid chain; its full sequence is Sulfite dehydrogenase subunit B (240 aa).

4Fe-4S ferredoxin-type domains are found at residues Leu-4 to Pro-34, Thr-64 to Asp-95, and Gly-97 to Gln-126. [4Fe-4S] cluster-binding residues include Cys-13, Cys-16, Cys-19, Cys-23, Cys-73, Cys-76, Cys-81, Cys-85, Cys-106, Cys-109, Cys-112, and Cys-116.

In terms of assembly, forms a heterotrimeric membrane-bound complex composed of a catalytic heterodimer (SoeAB) and a membrane anchor protein (SoeC). [4Fe-4S] cluster serves as cofactor.

Its subcellular location is the cell inner membrane. Part of the SoeABC complex that catalyzes the oxidation of sulfite to sulfate. SoeB is probably the electron transfer subunit. The sequence is that of Sulfite dehydrogenase subunit B from Allochromatium vinosum (strain ATCC 17899 / DSM 180 / NBRC 103801 / NCIMB 10441 / D) (Chromatium vinosum).